The sequence spans 807 residues: Glycerol-3-phosphate acyltransferase (807 aa).

The HXXXXD motif signature appears at 308–313 (CHRSHM).

It belongs to the GPAT/DAPAT family.

It localises to the cell inner membrane. It carries out the reaction sn-glycerol 3-phosphate + an acyl-CoA = a 1-acyl-sn-glycero-3-phosphate + CoA. It participates in phospholipid metabolism; CDP-diacylglycerol biosynthesis; CDP-diacylglycerol from sn-glycerol 3-phosphate: step 1/3. This chain is Glycerol-3-phosphate acyltransferase, found in Shewanella baltica (strain OS155 / ATCC BAA-1091).